The following is an 805-amino-acid chain: Pentatricopeptide repeat-containing protein At4g01570 (805 aa).

PPR repeat units follow at residues 91–125, 126–160, 161–196, 211–241, 247–277, 288–322, 323–357, 358–392, 393–427, 428–462, 463–497, 593–627, 629–663, 664–698, 699–733, and 734–768; these read SATAYSQIFRTVCRTGLLGEVPDLLGSMKEDGVNL, DQTMAKILLDSLIRSGKFESALGVLDYMEELGDCL, NPSVYDSVLIALVKKHELRLALSILFKLLEASDNHS, GTVAVNELLVGLRRADMRSEFKRVFEKLKGM, DTWSYNICIHGFGCWGDLDAALSLFKEMKER, DICTYNSLIHVLCLFGKAKDALIVWDELKVSGHEP, DNSTYRILIQGCCKSYRMDDAMRIYGEMQYNGFVP, DTIVYNCLLDGTLKARKVTEACQLFEKMVQEGVRA, SCWTYNILIDGLFRNGRAEAGFTLFCDLKKKGQFV, DAITFSIVGLQLCREGKLEGAVKLVEEMETRGFSV, DLVTISSLLIGFHKQGRWDWKEKLMKHIREGNLVP, DVDMMNTFLSIYLSKGDLSLACKLFEIFNGMGVTD, TSYTYNSMMSSFVKKGYFQTARGVLDQMFENFCAA, DIATYNVIIQGLGKMGRADLASAVLDRLTKQGGYL, DIVMYNTLINALGKATRLDEATQLFDHMKSNGINP, and DVVSYNTMIEVNSKAGKLKEAYKYLKAMLDAGCLP.

This sequence belongs to the PPR family. P subfamily.

This is Pentatricopeptide repeat-containing protein At4g01570 from Arabidopsis thaliana (Mouse-ear cress).